The chain runs to 297 residues: Mitochondrial ornithine transporter 1 (297 aa).

Solcar repeat units follow at residues 15–97 (GSPA…LKLT), 102–205 (DPTL…FKKN), and 212–292 (KPHF…FRET). 6 helical membrane-spanning segments follow: residues 18-38 (ASTFSAALVSSAISNVIGYPL), 72-91 (GLTLPLISATLSRSVSFTVY), 107-127 (YFISGLGTGTFISLFACPFEY), 184-204 (HLTRDALGSACYFTIYETFKK), 215-235 (FAYAFSGAFCGALSWILVFPV), and 264-285 (IYRGIGISLMRSALINSCNFTL).

Belongs to the mitochondrial carrier (TC 2.A.29) family.

It is found in the mitochondrion inner membrane. Functionally, required for arginine biosynthesis. Transports ornithine synthesized from glutamate in the mitochondrial matrix to the cytosol, where it is converted to arginine. The protein is Mitochondrial ornithine transporter 1 of Schizosaccharomyces pombe (strain 972 / ATCC 24843) (Fission yeast).